The sequence spans 518 residues: Arginyl-tRNA--protein transferase 1 (518 aa).

The span at 149 to 165 (ESLQSEGKNSKKEEPHE) shows a compositional bias: basic and acidic residues. Residues 149-207 (ESLQSEGKNSKKEEPHELLQSQDSVGEKLGSGEPSHSVKVHTVPKPGKGADLSKPPCRK) are disordered. Ser169 carries the post-translational modification Phosphoserine.

The protein belongs to the R-transferase family. As to quaternary structure, monomer. Interacts with LIAT1; LIAT1 is not a substrate of ATE1, the interaction takes place in the cytoplasm and seems to increase ATE1 arginyltransferase activity.

The protein localises to the nucleus. It localises to the cytoplasm. The catalysed reaction is an N-terminal L-alpha-aminoacyl-[protein] + L-arginyl-tRNA(Arg) = an N-terminal L-arginyl-L-aminoacyl-[protein] + tRNA(Arg) + H(+). Involved in the post-translational conjugation of arginine to the N-terminal aspartate or glutamate of a protein. This arginylation is required for degradation of the protein via the ubiquitin pathway. Does not arginylate cysteine residues. This is Arginyl-tRNA--protein transferase 1 (ATE1) from Macaca fascicularis (Crab-eating macaque).